We begin with the raw amino-acid sequence, 820 residues long: Crinkler effector protein 108 (820 aa).

A signal peptide spans 1 to 17 (MVKLYCAVVGVAGSAFS). The LQLFLAK domain stretch occupies residues 18-55 (VRVDESDTVDDLKDAIKAKKPNDFKDIDADKLELYVAK). The interval 58–111 (GVWLTEADVKSGVADITGLVRLEVVRAKLFSVGLSDEVVSEVDAQEEAAGRGPV) is DWL domain. The short motif at 112–117 (NVLVVV) is the HVLVXXP motif element. A Host nuclear localization signal motif is present at residues 118–124 (PMKKRRV). The interval 125–820 (DAGVDEERRF…MHYDDDEADL (696 aa)) is C-terminal DC effector domain. Residues Asn268, Asn371, and Asn703 are each glycosylated (N-linked (GlcNAc...) asparagine). The tract at residues 754 to 791 (NINTASFHELRRLEGVGDATAAKIIAERTIRRFSNLED) is hhH DNA-binding domain.

This sequence belongs to the Crinkler effector family.

It localises to the secreted. The protein localises to the host nucleus. In terms of biological role, secreted effector that suppresses plant basal defense and promotes plant susceptibility via targeting promoters of host HSP gene and thus inhibiting their expression. CRN108 binds directly to heat shock elements (HSEs) 5'-GAAnnTTC-3' and interferes with the association of the HSE with the plant heat shock transcription factors, which initializes HSP gene expression in response to stress. This chain is Crinkler effector protein 108, found in Phytophthora sojae (Soybean stem and root rot agent).